A 31-amino-acid chain; its full sequence is Cytochrome b6-f complex subunit 6 (31 aa).

Residues 4-24 traverse the membrane as a helical segment; that stretch reads ITSFFGFLLAALTITSVLFIG.

Belongs to the PetL family. The 4 large subunits of the cytochrome b6-f complex are cytochrome b6, subunit IV (17 kDa polypeptide, PetD), cytochrome f and the Rieske protein, while the 4 small subunits are PetG, PetL, PetM and PetN. The complex functions as a dimer.

It is found in the plastid. It localises to the chloroplast thylakoid membrane. Component of the cytochrome b6-f complex, which mediates electron transfer between photosystem II (PSII) and photosystem I (PSI), cyclic electron flow around PSI, and state transitions. PetL is important for photoautotrophic growth as well as for electron transfer efficiency and stability of the cytochrome b6-f complex. The chain is Cytochrome b6-f complex subunit 6 from Oenothera elata subsp. hookeri (Hooker's evening primrose).